The following is a 366-amino-acid chain: Aminomethyltransferase (366 aa).

This sequence belongs to the GcvT family. As to quaternary structure, the glycine cleavage system is composed of four proteins: P, T, L and H.

It carries out the reaction N(6)-[(R)-S(8)-aminomethyldihydrolipoyl]-L-lysyl-[protein] + (6S)-5,6,7,8-tetrahydrofolate = N(6)-[(R)-dihydrolipoyl]-L-lysyl-[protein] + (6R)-5,10-methylene-5,6,7,8-tetrahydrofolate + NH4(+). Functionally, the glycine cleavage system catalyzes the degradation of glycine. This is Aminomethyltransferase from Bacillus mycoides (strain KBAB4) (Bacillus weihenstephanensis).